Reading from the N-terminus, the 169-residue chain is Myosin regulatory light chain 2, skeletal muscle isoform A (169 aa).

Residue Ser21 is modified to Phosphoserine. EF-hand domains lie at 26–61 (SQIQ…MGQL), 96–131 (DPED…QCDR), and 132–167 (FTAE…GEEK). Ca(2+) is bound by residues Asp39, Asn41, Asp43, and Asp50.

In terms of assembly, myosin is a hexamer of 2 heavy chains and 4 light chains. Interacts with nanos3; the interaction negatively regulates mylpfa phosphorylation.

Myosin regulatory subunit that plays a role to maintain muscle integrity during early development. Plays a role in muscle contraction. This Danio rerio (Zebrafish) protein is Myosin regulatory light chain 2, skeletal muscle isoform A (mylpfa).